Here is a 268-residue protein sequence, read N- to C-terminus: Interleukin-1 alpha (268 aa).

A propeptide spanning residues 1 to 112 (MAKVPDLFED…NTEEEIIKPR (112 aa)) is cleaved from the precursor. K82 carries the post-translational modification N6-acetyllysine. The tract at residues 82-86 (KKRRL) is nuclear localization signal (NLS). S87 is modified (phosphoserine). N102 and N141 each carry an N-linked (GlcNAc...) asparagine glycan.

This sequence belongs to the IL-1 family. Monomer. Interacts with TMED10; the interaction mediates the translocation from the cytoplasm into the ERGIC (endoplasmic reticulum-Golgi intermediate compartment) and thereby secretion. Interacts with IL1R1. Interacts with S100A13; this interaction is the first step in the export of IL1A, followed by direct translocation of this complex across the plasma membrane. Post-translationally, acetylated within its nuclear localization sequence, which impacts subcellular localization. Proteolytic processed by CAPN1 in a calcium-dependent manner. Cleavage from 31 kDa precursor to 18 kDa biologically active molecules. In terms of processing, phosphorylated. Phosphorylation greatly enhances susceptibility to digestion and promotes the conversion of pre-IL1A alpha to the biologically active IL1A.

The protein resides in the nucleus. The protein localises to the cytoplasm. It is found in the secreted. Cytokine constitutively present intracellularly in nearly all resting non-hematopoietic cells that plays an important role in inflammation and bridges the innate and adaptive immune systems. After binding to its receptor IL1R1 together with its accessory protein IL1RAP, forms the high affinity interleukin-1 receptor complex. Signaling involves the recruitment of adapter molecules such as MYD88, IRAK1 or IRAK4. In turn, mediates the activation of NF-kappa-B and the three MAPK pathways p38, p42/p44 and JNK pathways. Within the cell, acts as an alarmin and cell death results in its liberation in the extracellular space after disruption of the cell membrane to induce inflammation and alert the host to injury or damage. In addition to its role as a danger signal, which occurs when the cytokine is passively released by cell necrosis, directly senses DNA damage and acts as signal for genotoxic stress without loss of cell integrity. The sequence is that of Interleukin-1 alpha (IL1A) from Bubalus carabanensis (Swamp type water buffalo).